An 83-amino-acid polypeptide reads, in one-letter code: Normal mucosa of esophagus-specific gene 1 protein (83 aa).

It belongs to the complex I NDUFA4 subunit family. As to expression, strongly expressed in vertebrae, brain, intestine and stomach.

The protein localises to the nucleus. The chain is Normal mucosa of esophagus-specific gene 1 protein (Nmes1) from Mus musculus (Mouse).